Here is a 256-residue protein sequence, read N- to C-terminus: Hypodermin-B (256 aa).

The N-terminal stretch at 1–22 is a signal peptide; sequence MLKFVILVCSVACVFGAVVPGG. A propeptide spans 23 to 30 (activation peptide); that stretch reads MLPQLDGR. One can recognise a Peptidase S1 domain in the interval 31–254; sequence IVGGFEADIE…VRSWITENAK (224 aa). Cys56 and Cys72 are joined by a disulfide. Active-site charge relay system residues include His71 and Asp116. 2 disulfide bridges follow: Cys180–Cys197 and Cys206–Cys230. Ser210 functions as the Charge relay system in the catalytic mechanism.

Belongs to the peptidase S1 family.

The protein resides in the secreted. Protease that shows preferential cleavage after Arg and Lys residues. The sequence is that of Hypodermin-B from Hypoderma lineatum (Early cattle grub).